The primary structure comprises 220 residues: Glycerol-3-phosphate acyltransferase (220 aa).

Transmembrane regions (helical) follow at residues 4-24, 53-73, 80-100, 116-136, and 138-158; these read LTIL…AVLV, VAAL…VYLA, PVYL…PIFF, MPIG…VLLV, and GYSS…TYLI. Positions 193–220 are disordered; it reads WGRQAQRRQEEVGEMDDVAQKRDERDKK. Residues 210-220 show a composition bias toward basic and acidic residues; sequence VAQKRDERDKK.

It belongs to the PlsY family. As to quaternary structure, probably interacts with PlsX.

It localises to the cell inner membrane. The enzyme catalyses an acyl phosphate + sn-glycerol 3-phosphate = a 1-acyl-sn-glycero-3-phosphate + phosphate. The protein operates within lipid metabolism; phospholipid metabolism. Functionally, catalyzes the transfer of an acyl group from acyl-phosphate (acyl-PO(4)) to glycerol-3-phosphate (G3P) to form lysophosphatidic acid (LPA). This enzyme utilizes acyl-phosphate as fatty acyl donor, but not acyl-CoA or acyl-ACP. This chain is Glycerol-3-phosphate acyltransferase, found in Aeromonas salmonicida (strain A449).